The sequence spans 327 residues: Phenylalanine--tRNA ligase alpha subunit (327 aa).

E252 is a binding site for Mg(2+).

Belongs to the class-II aminoacyl-tRNA synthetase family. Phe-tRNA synthetase alpha subunit type 1 subfamily. In terms of assembly, tetramer of two alpha and two beta subunits. The cofactor is Mg(2+).

Its subcellular location is the cytoplasm. The catalysed reaction is tRNA(Phe) + L-phenylalanine + ATP = L-phenylalanyl-tRNA(Phe) + AMP + diphosphate + H(+). The protein is Phenylalanine--tRNA ligase alpha subunit of Shigella boydii serotype 18 (strain CDC 3083-94 / BS512).